Reading from the N-terminus, the 1399-residue chain is MNQEIMNLFNPTTPAQVFDQIRISIASPEKILSWSYGEIKKPETINYRTFKPERDGLFCARIFGPIKDYECLCGKYKRMKYKGIICEKCSVEVTLSRVRRERMGHIELAAPVAHIWFLKSLPSRIGLLLDMTLKDLERILYFEYYVVLEPGLTALKDRQLLSEDEYLKAQDEYGQDSFTAMIGAEAIRELLRGLELEKLEQTLRAEMQETDSDIKHKKLAKRLKIVEAFRHSGNKPEWMIMTVVPVIPPDLRPLVPLDGGRFATSDLNDLYRRVINRNNRLKRLMELRAPDIIIRNEKRMLQEAVDALFDNGRRGRVITGANKRPLKSLADMLKGKQGRFRQNLLGKRVDYSGRSVIVVGPELRLHQCGLPKKMALELFKPFIYSRLDAKGLSTTVKQAKKLVEKERPEVWDILDEVIREHPVLLNRAPTLHRLGIQAFEPVLIEGKAIQLHPLVCSAFNADFDGDQMAVHVPLSLEAQLEARVLMMSTNNILHPANGQPIIVPSQDIVLGLYYLSIMREGMNGQGMTFGNMAELEHALHAKAIHLHSKIKYRWEGMDETGKISKRWIETTAGRVMLGNVLPRHPRISYEIINKLMTKREISGVIDQVYRHCGQKETVIFCDRIMALGFYNAFKAGISFGKDDMVVPAGKWKIVDTTRTLAKDFEQQYNDGLITHGEKYNKVVDAWSKASEEIAKEMMKEISVTKKTATGADADINSIYMMSHSGARGSPAQMRQLAGMRGLMAKPSGEIIETPIISNFKEGLSVLEYFNSTHGARKGLADTALKTANSGYLTRRLVDVAQDCIITQDDCGTHLGIKMRAIVDAGTVVASLGSRILGRVPCDDVRDPATNAVLVKAGTLMEESHIDAIQQAGVQEVKIRSALTCELVNGICKMCYGRDLARGTPVNHGEAVGVIAAQSIGEPGTQLTMRTFHIGGAAQLNEQSFVESNFEGRVVIKNKAIARNSEGHLIAMVRNMVVTIVDPDGSERATHRIQYGARMHVDDGDMIKRGQRIAEWDPYTRPILTEAEGTIGFEDLTEGLSISETLDESTGIAKRVVIDWRGTRGGADLRPAIVIKGKDGKVLKLARGGDARYMLSVDAILSVDVGTTVKPGDILARISTESAKTRDITGGLPRVAELFEARKPKDAAIIAEIAGTIRFGRDYKNKRRISIEPVDKTEEPREYLIPKGKHIHLQDGDIVEKGDFIVEGNPAPHDILAIKGIEELAAYLVNEIQEVYRLQGVLINDKHIEVIVRQMLQKIEVTDQGDTDMIAGEQVDKIEFDALNAKAVEEGKKPATGNPVLLGITKASLQTRSFFSAASFQETTRVLTEAAVNGKIDPLEGLKENVIVGRLIPAGTGASMARIREVALKRDKLILDEREKQAAIVPSQPEPQPLALPPAE.

Residues Cys71, Cys73, Cys86, and Cys89 each contribute to the Zn(2+) site. Asp462, Asp464, and Asp466 together coordinate Mg(2+). Residues Cys810, Cys884, Cys891, and Cys894 each coordinate Zn(2+). The disordered stretch occupies residues 1379–1399 (KQAAIVPSQPEPQPLALPPAE). The span at 1387-1399 (QPEPQPLALPPAE) shows a compositional bias: pro residues.

The protein belongs to the RNA polymerase beta' chain family. The RNAP catalytic core consists of 2 alpha, 1 beta, 1 beta' and 1 omega subunit. When a sigma factor is associated with the core the holoenzyme is formed, which can initiate transcription. Mg(2+) serves as cofactor. Requires Zn(2+) as cofactor.

The enzyme catalyses RNA(n) + a ribonucleoside 5'-triphosphate = RNA(n+1) + diphosphate. Functionally, DNA-dependent RNA polymerase catalyzes the transcription of DNA into RNA using the four ribonucleoside triphosphates as substrates. In Bradyrhizobium sp. (strain BTAi1 / ATCC BAA-1182), this protein is DNA-directed RNA polymerase subunit beta'.